Reading from the N-terminus, the 233-residue chain is Tropomyosin (233 aa).

Positions 6 to 222 (FDTVNEKYQE…KERYKAISDE (217 aa)) form a coiled coil. Residues 48–88 (MERSEERLQTATEKLEEASKAADESERNRKVLENLNNASEE) are disordered. Residues 51–79 (SEERLQTATEKLEEASKAADESERNRKVL) show a composition bias toward basic and acidic residues.

The protein belongs to the tropomyosin family. In terms of assembly, homodimer.

In terms of biological role, tropomyosin, in association with the troponin complex, plays a central role in the calcium dependent regulation of muscle contraction. This chain is Tropomyosin, found in Magallana gigas (Pacific oyster).